A 55-amino-acid polypeptide reads, in one-letter code: Large ribosomal subunit protein bL33B (55 aa).

It belongs to the bacterial ribosomal protein bL33 family.

This Kineococcus radiotolerans (strain ATCC BAA-149 / DSM 14245 / SRS30216) protein is Large ribosomal subunit protein bL33B.